A 389-amino-acid polypeptide reads, in one-letter code: MKSSVLLSLCTAALVAGAAHPLEPQVVLKDGQSTFTEPDEYLIELSPGETRWVTEEGKWELRRQNINFFDITHHEDLGTINANRLIEKSVKFPSKPAFNKTVVPLLKKLKKDNMRKHLETFTSFHTRYYKSQYGAQSSAWLLEQVSKTLSDAGAVNASVKAFPHPWGQSSIIATLPGKSNKTVVIGAHQDSINLFLPSILAAPGADDDGSGTVTILEALRVLLKSEGILDGSAPNTVEFHWYSAEEGGLLGSQAIFQSYEKEGRDVKAMLQQDMTGYVQKTLDAGEPESVGVITDFVDPGLTEFIKQIITVYCDIPFILTKCGYACSDHASASKAGYPSAFVIESDFKYSDSKIHTTEDKIEYLSFDHMLQHAKLTLALAYELAFAEFK.

Positions 1-18 (MKSSVLLSLCTAALVAGA) are cleaved as a signal peptide. The propeptide occupies 19–89 (AHPLEPQVVL…INANRLIEKS (71 aa)). N-linked (GlcNAc...) asparagine glycans are attached at residues asparagine 99, asparagine 156, and asparagine 180. Positions 188, 207, 246, and 273 each coordinate Zn(2+). Cysteine 322 and cysteine 326 are oxidised to a cystine. Residue histidine 355 coordinates Zn(2+).

This sequence belongs to the peptidase M28 family. M28E subfamily. As to quaternary structure, monomer. Requires Zn(2+) as cofactor.

The protein localises to the secreted. Extracellular aminopeptidase that allows assimilation of proteinaceous substrates. This chain is Leucine aminopeptidase 1 (LAP1), found in Phaeosphaeria nodorum (strain SN15 / ATCC MYA-4574 / FGSC 10173) (Glume blotch fungus).